Consider the following 218-residue polypeptide: Large ribosomal subunit protein uL3 (218 aa).

It belongs to the universal ribosomal protein uL3 family. As to quaternary structure, part of the 50S ribosomal subunit. Forms a cluster with proteins L14 and L19.

One of the primary rRNA binding proteins, it binds directly near the 3'-end of the 23S rRNA, where it nucleates assembly of the 50S subunit. This is Large ribosomal subunit protein uL3 from Corynebacterium diphtheriae (strain ATCC 700971 / NCTC 13129 / Biotype gravis).